The sequence spans 283 residues: Hydrogenase expression/formation protein HoxQ (283 aa).

The interval 1–29 (MNDDLPILPPGFGPGSHGEEERPDCPSMP) is disordered.

Belongs to the HupH/HyaF family.

This is Hydrogenase expression/formation protein HoxQ (hoxQ) from Azotobacter vinelandii.